The following is a 475-amino-acid chain: E3 ubiquitin-protein ligase TRIM62 (475 aa).

The RING-type zinc finger occupies 11 to 54 (CSICLSIYQDPVSLGCEHYFCRRCITEHWVRQEAQGARDCPECR). The segment at 88–128 (RAARPCQAHDKVKLFCLTDRALLCFFCDEPALHEQHQVTGI) adopts a B box-type zinc-finger fold. Cys93, His96, Cys114, and His120 together coordinate Zn(2+). The stretch at 121–241 (EQHQVTGIDD…LQERLAETDR (121 aa)) forms a coiled coil. Positions 277 to 475 (PLQYTIWKSL…QPLRINTVRI (199 aa)) constitute a B30.2/SPRY domain.

It belongs to the TRIM/RBCC family. As to quaternary structure, interacts with the ubiquitin-conjugating enzyme, UBE2D2. Polyubiquitinated, autoubiquitinated in the presence of UBE2D2.

The protein resides in the cytoplasm. It carries out the reaction S-ubiquitinyl-[E2 ubiquitin-conjugating enzyme]-L-cysteine + [acceptor protein]-L-lysine = [E2 ubiquitin-conjugating enzyme]-L-cysteine + N(6)-ubiquitinyl-[acceptor protein]-L-lysine.. It participates in protein modification; protein ubiquitination. Its function is as follows. E3 ubiquitin ligase that plays a role in antifungal immunity by mediating 'Lys-27'-linked ubiquitination of CARD9 downstream of C-type lectin receptors; leading to CARD9 activation, followed by activation of NF-kappa-B and MAP kinase p38 pathways. E3 ubiquitin ligase activity is dependent on E2 ubiquitin-conjugating enzyme UBE2D2. This Mus musculus (Mouse) protein is E3 ubiquitin-protein ligase TRIM62.